Reading from the N-terminus, the 201-residue chain is DeSI-like protein sdu1 (201 aa).

The PPPDE domain occupies 1–143 (MKVYINVYDL…AFPTITNALL (143 aa)). Residues histidine 29 and cysteine 105 contribute to the active site. Residues 146 to 201 (GQKNTSDVDDSSDSSSDVDEETLIVSKSKKAHKDIPKFSAPPPSADLNNLITDSLP) are disordered. A compositionally biased stretch (acidic residues) spans 152–167 (DVDDSSDSSSDVDEET). Residues 191 to 201 (DLNNLITDSLP) are compositionally biased toward polar residues.

This sequence belongs to the DeSI family.

The protein resides in the cytoplasm. In terms of biological role, has a role in meiosis. The protein is DeSI-like protein sdu1 (sdu1) of Schizosaccharomyces pombe (strain 972 / ATCC 24843) (Fission yeast).